Reading from the N-terminus, the 416-residue chain is Glutamyl-tRNA reductase (416 aa).

Substrate-binding positions include 48–51, serine 104, 109–111, and glutamine 115; these read TCNR and EPQ. Catalysis depends on cysteine 49, which acts as the Nucleophile. Residue 184–189 coordinates NADP(+); it reads GAGEMI.

The protein belongs to the glutamyl-tRNA reductase family. Homodimer.

The catalysed reaction is (S)-4-amino-5-oxopentanoate + tRNA(Glu) + NADP(+) = L-glutamyl-tRNA(Glu) + NADPH + H(+). It participates in porphyrin-containing compound metabolism; protoporphyrin-IX biosynthesis; 5-aminolevulinate from L-glutamyl-tRNA(Glu): step 1/2. Functionally, catalyzes the NADPH-dependent reduction of glutamyl-tRNA(Glu) to glutamate 1-semialdehyde (GSA). The protein is Glutamyl-tRNA reductase of Dechloromonas aromatica (strain RCB).